The following is a 224-amino-acid chain: CRP-like cAMP-activated global transcriptional regulator (224 aa).

Residues 64–70 (GRENLLT), 79–82 (GELS), 89–90 (RT), 134–135 (TN), 142–143 (IF), and 178–188 (EEIAQLVGASR) each bind 3',5'-cyclic AMP. Residues 144–217 (TDVPGRVAKQ…GKSVLISDSE (74 aa)) form the HTH crp-type domain. The H-T-H motif DNA-binding region spans 177-196 (QEEIAQLVGASRETVNKALA).

Homodimer.

In terms of biological role, global transcriptional regulator that complexes with cAMP and binds to specific DNA promoter sites, causing DNA-bending, to regulate transcription. cAMP improves binding to specific DNA sequences, probably by altering protein conformation. Activates expression of whiB1. This is CRP-like cAMP-activated global transcriptional regulator from Mycobacterium tuberculosis (strain CDC 1551 / Oshkosh).